Here is a 187-residue protein sequence, read N- to C-terminus: Putative protein 2 (187 aa).

Helical transmembrane passes span 10-27 (MLAA…NVGV) and 99-121 (VTII…LLLV).

The protein belongs to the TMEM9 family.

The protein localises to the membrane. This chain is Putative protein 2, found in Takifugu rubripes (Japanese pufferfish).